The sequence spans 429 residues: Histidine--tRNA ligase (429 aa).

It belongs to the class-II aminoacyl-tRNA synthetase family. Homodimer.

It is found in the cytoplasm. It catalyses the reaction tRNA(His) + L-histidine + ATP = L-histidyl-tRNA(His) + AMP + diphosphate + H(+). This chain is Histidine--tRNA ligase, found in Streptococcus mutans serotype c (strain ATCC 700610 / UA159).